The chain runs to 443 residues: F-box only protein 39 (443 aa).

The region spanning 16–61 (WATLPDVCLRRVFWWLGDRDRSRAALVCRKWNQMMYSADLWRYRTI) is the F-box domain.

As to quaternary structure, directly interacts with SKP1 and CUL1.

In terms of biological role, substrate-recognition component of the SCF (SKP1-CUL1-F-box protein)-type E3 ubiquitin ligase complex. The chain is F-box only protein 39 (FBXO39) from Bos taurus (Bovine).